A 212-amino-acid polypeptide reads, in one-letter code: Thiamine-phosphate synthase (212 aa).

4-amino-2-methyl-5-(diphosphooxymethyl)pyrimidine-binding positions include 41 to 45 (QYREK) and Asp76. Asp77 and Asp96 together coordinate Mg(2+). 4-amino-2-methyl-5-(diphosphooxymethyl)pyrimidine is bound at residue Ser114. 141 to 143 (TTS) provides a ligand contact to 2-[(2R,5Z)-2-carboxy-4-methylthiazol-5(2H)-ylidene]ethyl phosphate. Lys144 provides a ligand contact to 4-amino-2-methyl-5-(diphosphooxymethyl)pyrimidine. 2-[(2R,5Z)-2-carboxy-4-methylthiazol-5(2H)-ylidene]ethyl phosphate is bound by residues Gly172 and 192–193 (IS).

It belongs to the thiamine-phosphate synthase family. Mg(2+) is required as a cofactor.

It carries out the reaction 2-[(2R,5Z)-2-carboxy-4-methylthiazol-5(2H)-ylidene]ethyl phosphate + 4-amino-2-methyl-5-(diphosphooxymethyl)pyrimidine + 2 H(+) = thiamine phosphate + CO2 + diphosphate. The enzyme catalyses 2-(2-carboxy-4-methylthiazol-5-yl)ethyl phosphate + 4-amino-2-methyl-5-(diphosphooxymethyl)pyrimidine + 2 H(+) = thiamine phosphate + CO2 + diphosphate. The catalysed reaction is 4-methyl-5-(2-phosphooxyethyl)-thiazole + 4-amino-2-methyl-5-(diphosphooxymethyl)pyrimidine + H(+) = thiamine phosphate + diphosphate. Its pathway is cofactor biosynthesis; thiamine diphosphate biosynthesis; thiamine phosphate from 4-amino-2-methyl-5-diphosphomethylpyrimidine and 4-methyl-5-(2-phosphoethyl)-thiazole: step 1/1. Condenses 4-methyl-5-(beta-hydroxyethyl)thiazole monophosphate (THZ-P) and 2-methyl-4-amino-5-hydroxymethyl pyrimidine pyrophosphate (HMP-PP) to form thiamine monophosphate (TMP). The protein is Thiamine-phosphate synthase of Leuconostoc citreum (strain KM20).